The sequence spans 104 residues: uncharacterized protein (104 aa).

Residues 55-104 (RPFSSDRINRPFSPDKKGEPIFPDKRDRPFSPDRINRPFSPDKKGEPIFP) are disordered.

It localises to the plastid. This is an uncharacterized protein from Euglena longa (Euglenophycean alga).